The following is a 175-amino-acid chain: NAD(P)H-quinone oxidoreductase subunit J (175 aa).

It belongs to the complex I 30 kDa subunit family. NDH-1 can be composed of about 15 different subunits; different subcomplexes with different compositions have been identified which probably have different functions.

The protein resides in the cellular thylakoid membrane. The catalysed reaction is a plastoquinone + NADH + (n+1) H(+)(in) = a plastoquinol + NAD(+) + n H(+)(out). The enzyme catalyses a plastoquinone + NADPH + (n+1) H(+)(in) = a plastoquinol + NADP(+) + n H(+)(out). In terms of biological role, NDH-1 shuttles electrons from an unknown electron donor, via FMN and iron-sulfur (Fe-S) centers, to quinones in the respiratory and/or the photosynthetic chain. The immediate electron acceptor for the enzyme in this species is believed to be plastoquinone. Couples the redox reaction to proton translocation, and thus conserves the redox energy in a proton gradient. Cyanobacterial NDH-1 also plays a role in inorganic carbon-concentration. This chain is NAD(P)H-quinone oxidoreductase subunit J, found in Nostoc sp. (strain PCC 7120 / SAG 25.82 / UTEX 2576).